Consider the following 107-residue polypeptide: Small ribosomal subunit protein uS10 (107 aa).

The protein belongs to the universal ribosomal protein uS10 family. Part of the 30S ribosomal subunit.

In terms of biological role, involved in the binding of tRNA to the ribosomes. This Deinococcus deserti (strain DSM 17065 / CIP 109153 / LMG 22923 / VCD115) protein is Small ribosomal subunit protein uS10.